A 369-amino-acid polypeptide reads, in one-letter code: MGEITNVTEYQAIAKQKLPKMIYDYYASGAEDEWTLQENREAFARILFRPRILIDVSKIDMATTVLGFKISMPIMIAPSAMQKMAHPDGEYATARAASAAGTIMTLSSWATSSVEEVASTGPGIRFFQLYVYKDRRVVEQLVRRAERAGFKAIALTVDTPRLGRREADIKNRFVLPPFLTLKNFEGLELGKMDQASDSGLASYVAGQIDRTLSWKDVKWLQTITTLPILVKGVITAEDTRLAVENGAAGIIVSNHGARQLDYVPATISALEEVVKAARGQLPVFLDGGVRRGTDVFKALALGAAGVFIGRPVVFSLAAAGEAGVRNVLQMLRDEFELTMALSGCTSLADITRNHVITEADKLGVMPSRL.

The 360-residue stretch at 1 to 360 (MGEITNVTEY…TRNHVITEAD (360 aa)) folds into the FMN hydroxy acid dehydrogenase domain. Tyr-25 serves as a coordination point for glyoxylate. FMN is bound by residues 78 to 80 (PSA), Ser-107, 128 to 130 (QLY), and Thr-156. Glyoxylate is bound at residue Tyr-130. Position 165 (Arg-165) interacts with glyoxylate. Lys-231 and Ser-253 together coordinate FMN. The glyoxylate site is built by His-255 and Arg-258. His-255 serves as the catalytic Proton acceptor. Residues 286–290 (DGGVR) and 309–310 (GR) contribute to the FMN site. The Microbody targeting signal motif lies at 367–369 (SRL).

This sequence belongs to the FMN-dependent alpha-hydroxy acid dehydrogenase family. As to quaternary structure, homotetramer. FMN is required as a cofactor.

The protein localises to the peroxisome. The catalysed reaction is glycolate + O2 = glyoxylate + H2O2. It participates in photosynthesis; photorespiration; glycine from 2-phosphoglycolate: step 2/3. Its function is as follows. Catalyzes the oxidation of glycolate to glyoxylate, with a reduction of O2 to H2O2. Is a key enzyme in photorespiration in green plants. The chain is Glycolate oxidase 5 (GLO5) from Oryza sativa subsp. japonica (Rice).